The chain runs to 252 residues: Triosephosphate isomerase (252 aa).

Residue 9–11 participates in substrate binding; the sequence is NWK. The active-site Electrophile is the His100. Glu171 functions as the Proton acceptor in the catalytic mechanism. Residues Gly177, Ser216, and 237–238 each bind substrate; that span reads GG.

Belongs to the triosephosphate isomerase family. In terms of assembly, homodimer.

The protein resides in the cytoplasm. The catalysed reaction is D-glyceraldehyde 3-phosphate = dihydroxyacetone phosphate. The protein operates within carbohydrate biosynthesis; gluconeogenesis. It functions in the pathway carbohydrate degradation; glycolysis; D-glyceraldehyde 3-phosphate from glycerone phosphate: step 1/1. Involved in the gluconeogenesis. Catalyzes stereospecifically the conversion of dihydroxyacetone phosphate (DHAP) to D-glyceraldehyde-3-phosphate (G3P). This is Triosephosphate isomerase from Polynucleobacter asymbioticus (strain DSM 18221 / CIP 109841 / QLW-P1DMWA-1) (Polynucleobacter necessarius subsp. asymbioticus).